A 338-amino-acid chain; its full sequence is Malate dehydrogenase, mitochondrial (338 aa).

The N-terminal 24 residues, 1-24, are a transit peptide targeting the mitochondrion; the sequence is MLSALARPAGAALRRSFSTSAQNN. NAD(+) is bound by residues 31-37 and D57; that span reads GASGGIG. S33 carries an O-linked (GlcNAc) serine glycan. N6-acetyllysine; alternate is present on residues K78 and K91. Residues K78 and K91 each carry the N6-succinyllysine; alternate modification. Substrate is bound by residues R104 and R110. Residues N117 and 140 to 142 each bind NAD(+); that span reads ISN. A substrate-binding site is contributed by N142. K165 carries the post-translational modification N6-acetyllysine. R176 provides a ligand contact to substrate. K185 carries the N6-acetyllysine; alternate modification. At K185 the chain carries N6-succinyllysine; alternate. The Proton acceptor role is filled by H200. At K203 the chain carries N6-succinyllysine. K215 and K239 each carry N6-acetyllysine; alternate. An N6-succinyllysine; alternate mark is found at K215 and K239. The residue at position 239 (K239) is an N6-malonyllysine; alternate. Position 246 is a phosphoserine (S246). NAD(+) is bound at residue M251. The residue at position 269 (K269) is an N6-succinyllysine. N6-acetyllysine; alternate is present on residues K296, K301, K307, K314, and K324. K296, K301, K307, K314, and K324 each carry N6-succinyllysine; alternate. The residue at position 307 (K307) is an N6-malonyllysine; alternate. S326 carries the post-translational modification Phosphoserine. An N6-acetyllysine; alternate mark is found at K328, K329, and K335. An N6-succinyllysine; alternate modification is found at K328. The residue at position 329 (K329) is an N6-malonyllysine; alternate. K335 bears the N6-succinyllysine; alternate mark.

The protein belongs to the LDH/MDH superfamily. MDH type 1 family. In terms of assembly, homodimer. Acetylation is enhanced after treatment either with trichostin A (TCA) or with nicotinamide (NAM) with the appearance of tri- and tetraacetylations. Glucose also increases acetylation.

The protein resides in the mitochondrion matrix. It catalyses the reaction (S)-malate + NAD(+) = oxaloacetate + NADH + H(+). Enzyme activity is enhanced by acetylation. The chain is Malate dehydrogenase, mitochondrial (MDH2) from Bos taurus (Bovine).